The primary structure comprises 198 residues: Cyclin-dependent kinase inhibitor 1B (198 aa).

Residues 1 to 11 (MSNVRVSNGSP) show a composition bias toward polar residues. A disordered region spans residues 1–22 (MSNVRVSNGSPSLERMDARQAE). At S10 the chain carries Phosphoserine; by UHMK1. The segment at 51–91 (DMEEASQRKWNFDFQNHKPLEGKYEWQEVEKGSLPEFYYRP) is interaction with CDK2. At Y74 the chain carries Phosphotyrosine; by SRC. The tract at residues 87–198 (FYYRPPRPPK…KKPGLRRRQT (112 aa)) is disordered. A Phosphotyrosine; by ABL, LYN and SRC modification is found at Y88. Residue Y89 is modified to Phosphotyrosine. The span at 104 to 113 (QESQDVSGNR) shows a compositional bias: polar residues. Residues 126–137 (EDTHLVDQKTDT) are compositionally biased toward basic and acidic residues. Residues 153–169 (KRPATDDSSPQNKRANR) carry the Nuclear localization signal motif. A Phosphothreonine; by CaMK1, PKB/AKT1 and PIM1 modification is found at T157. T170 is subject to Phosphothreonine. Positions 175–186 (SDGSPNAGSVEQ) are enriched in polar residues. At T187 the chain carries Phosphothreonine; by PKB/AKT1, CDK1 and CDK2. T198 carries the post-translational modification Phosphothreonine; by CaMK1, PKB/AKT1, RPS6KA1, RPS6KA3 and PIM1.

Belongs to the CDI family. As to quaternary structure, forms a ternary complex composed of CCNE1, CDK2 and CDKN1B. Interacts directly with CCNE1; the interaction is inhibited by CDK2-dependent phosphorylation on Thr-187. Interacts with COPS5, subunit of the COP9 signalosome complex; the interaction leads to CDKN1B degradation. Interacts with NUP50; the interaction leads to nuclear import and degradation of phosphorylated CDKN1B. Interacts with CCND1 and SNX6. Interacts (Thr-198-phosphorylated form) with 14-3-3 proteins, binds strongly YWHAQ, weakly YWHAE and YWHAH, but not YWHAB nor YWHAZ; the interaction with YWHAQ results in translocation to the cytoplasm. Interacts with AKT1 and LYN; the interactions lead to cytoplasmic mislocation, phosphorylation of CDKN1B and inhibition of cell cycle arrest. Forms a ternary complex with CCNA2 and CDK2; CDKN1B inhibits the kinase activity of CDK2 through conformational rearrangements. Interacts (unphosphorylated form) with CDK2. Forms a complex with CDK2 and SPDYA, but does not directly interact with SPDYA. Forms a ternary complex composed of cyclin D, CDK4 and CDKN1B. Interacts (phosphorylated on Tyr-88 and Tyr-89) with CDK4; the interaction is required for cyclin D and CDK4 complex assembly, induces nuclear translocation and activates the CDK4 kinase activity. Interacts with GRB2. Interacts with PIM1. Identified in a complex with SKP1, SKP2 and CKS1B. Interacts with UHMK1; the interaction leads to cytoplasmic mislocation, phosphorylation of CDKN1B and inhibition of cell cycle arrest. Also interacts with CDK1. Dephosphorylated on Thr-187 by PPM1H, leading to CDKN1B stability. Phosphorylated; phosphorylation occurs on serine, threonine and tyrosine residues. Phosphorylation on Ser-10 is the major site of phosphorylation in resting cells, takes place at the G(0)-G(1) phase and leads to protein stability. Phosphorylation on other sites is greatly enhanced by mitogens, growth factors, cMYC and in certain cancer cell lines. The phosphorylated form found in the cytoplasm is inactivate. Phosphorylation on Thr-198 is required for interaction with 14-3-3 proteins. Phosphorylation on Thr-187, by CDK1 and CDK2 leads to protein ubiquitination and proteasomal degradation. Tyrosine phosphorylation promotes this process. Phosphorylation by PKB/AKT1 can be suppressed by LY294002, an inhibitor of the catalytic subunit of PI3K. Phosphorylation on Tyr-88 and Tyr-89 has no effect on binding CDK2, but is required for binding CDK4. Dephosphorylated on tyrosine residues by G-CSF. Dephosphorylated on Thr-187 by PPM1H, leading to CDKN1B stability. In terms of processing, ubiquitinated; in the cytoplasm by the KPC complex (composed of RNF123/KPC1 and UBAC1/KPC2) and, in the nucleus, by SCF(SKP2). The latter requires prior phosphorylation on Thr-187. Ubiquitinated; by a TRIM21-containing SCF(SKP2)-like complex; leads to its degradation. Post-translationally, subject to degradation in the lysosome. Interaction with SNX6 promotes lysosomal degradation.

The protein resides in the nucleus. It localises to the cytoplasm. The protein localises to the endosome. Important regulator of cell cycle progression. Inhibits the kinase activity of CDK2 bound to cyclin A, but has little inhibitory activity on CDK2 bound to SPDYA. Involved in G1 arrest. Potent inhibitor of cyclin E- and cyclin A-CDK2 complexes. Forms a complex with cyclin type D-CDK4 complexes and is involved in the assembly, stability, and modulation of CCND1-CDK4 complex activation. Acts either as an inhibitor or an activator of cyclin type D-CDK4 complexes depending on its phosphorylation state and/or stoichometry. The sequence is that of Cyclin-dependent kinase inhibitor 1B (CDKN1B) from Felis catus (Cat).